We begin with the raw amino-acid sequence, 382 residues long: Dual-specificity RNA methyltransferase RlmN (382 aa).

The Proton acceptor role is filled by glutamate 94. Positions 100–336 (EANRGTLCVS…NTITRKTRGD (237 aa)) constitute a Radical SAM core domain. The cysteines at positions 107 and 342 are disulfide-linked. Residues cysteine 114, cysteine 118, and cysteine 121 each coordinate [4Fe-4S] cluster. Residues 168-169 (GE), serine 200, 222-224 (SLH), and asparagine 299 contribute to the S-adenosyl-L-methionine site. The active-site S-methylcysteine intermediate is the cysteine 342.

This sequence belongs to the radical SAM superfamily. RlmN family. It depends on [4Fe-4S] cluster as a cofactor.

It localises to the cytoplasm. The catalysed reaction is adenosine(2503) in 23S rRNA + 2 reduced [2Fe-2S]-[ferredoxin] + 2 S-adenosyl-L-methionine = 2-methyladenosine(2503) in 23S rRNA + 5'-deoxyadenosine + L-methionine + 2 oxidized [2Fe-2S]-[ferredoxin] + S-adenosyl-L-homocysteine. The enzyme catalyses adenosine(37) in tRNA + 2 reduced [2Fe-2S]-[ferredoxin] + 2 S-adenosyl-L-methionine = 2-methyladenosine(37) in tRNA + 5'-deoxyadenosine + L-methionine + 2 oxidized [2Fe-2S]-[ferredoxin] + S-adenosyl-L-homocysteine. In terms of biological role, specifically methylates position 2 of adenine 2503 in 23S rRNA and position 2 of adenine 37 in tRNAs. m2A2503 modification seems to play a crucial role in the proofreading step occurring at the peptidyl transferase center and thus would serve to optimize ribosomal fidelity. The sequence is that of Dual-specificity RNA methyltransferase RlmN from Legionella pneumophila subsp. pneumophila (strain Philadelphia 1 / ATCC 33152 / DSM 7513).